We begin with the raw amino-acid sequence, 255 residues long: Acetylglutamate kinase (255 aa).

Substrate-binding positions include Gly-40–Gly-41, Arg-62, and Asn-153.

This sequence belongs to the acetylglutamate kinase family. ArgB subfamily.

The protein resides in the cytoplasm. The catalysed reaction is N-acetyl-L-glutamate + ATP = N-acetyl-L-glutamyl 5-phosphate + ADP. It participates in amino-acid biosynthesis; L-arginine biosynthesis; N(2)-acetyl-L-ornithine from L-glutamate: step 2/4. Its function is as follows. Catalyzes the ATP-dependent phosphorylation of N-acetyl-L-glutamate. In Bacillus thuringiensis (strain Al Hakam), this protein is Acetylglutamate kinase.